The sequence spans 321 residues: Probable proline iminopeptidase (321 aa).

An AB hydrolase-1 domain is found at K35 to M296. S110 functions as the Nucleophile in the catalytic mechanism. The active site involves D266. The active-site Proton donor is the H294.

The protein belongs to the peptidase S33 family.

It localises to the cytoplasm. It catalyses the reaction Release of N-terminal proline from a peptide.. In terms of biological role, specifically catalyzes the removal of N-terminal proline residues from peptides. The sequence is that of Probable proline iminopeptidase (pip) from Leptolyngbya boryana (Plectonema boryanum).